The primary structure comprises 458 residues: MSSVATIKRNIIPPHLEVKGGRPLSGILKVSGAKNSSLALMAAALLTKEKLLIQNVPELTDIEVMSEILRNLGAKLTKTNNSIEINSESIHNVELPYELVHSLRASFFCVGPLLTRLGEAKIPLPGGCNIGARPVDEHINGLKALGAEVEVINDVVKAKVSTKDKRLLGANITLKYPSVGATETILMASCLASGKTTISNPAREPEIQDLAKMLNSMGAKVFGAGTKRITILGVESLSGTSHCVIPDRIEAGTFLIAAAITRSPLIIGPVIPNHLSAVISKLKECGCSISQHGNHHLKIIPIEISGVDITTSPFPGFPTDLQAPFMSLMATAKGSSKIKERVFENRMQHVLELNKMGACIYLENNTAYIKGVKELVGSNVEGGDLRSSAAIILACLSAKGNSIFTGLEHLDRGYEKLEEKLTNAGSIISRKFDQITSHSSFSNKIISEDNIDTQKNAA.

Residue lysine 34–asparagine 35 participates in phosphoenolpyruvate binding. Arginine 104 contributes to the UDP-N-acetyl-alpha-D-glucosamine binding site. Cysteine 128 serves as the catalytic Proton donor. Residue cysteine 128 is modified to 2-(S-cysteinyl)pyruvic acid O-phosphothioketal. 2 residues coordinate UDP-N-acetyl-alpha-D-glucosamine: aspartate 320 and valine 342.

The protein belongs to the EPSP synthase family. MurA subfamily.

It localises to the cytoplasm. It carries out the reaction phosphoenolpyruvate + UDP-N-acetyl-alpha-D-glucosamine = UDP-N-acetyl-3-O-(1-carboxyvinyl)-alpha-D-glucosamine + phosphate. The protein operates within cell wall biogenesis; peptidoglycan biosynthesis. In terms of biological role, cell wall formation. Adds enolpyruvyl to UDP-N-acetylglucosamine. This is UDP-N-acetylglucosamine 1-carboxyvinyltransferase from Prochlorococcus marinus (strain NATL1A).